Reading from the N-terminus, the 366-residue chain is tRNA/tmRNA (uracil-C(5))-methyltransferase (366 aa).

Residues Gln190, Tyr218, Asn223, Glu239, and Asp299 each coordinate S-adenosyl-L-methionine. Cys324 functions as the Nucleophile in the catalytic mechanism. Glu358 (proton acceptor) is an active-site residue.

It belongs to the class I-like SAM-binding methyltransferase superfamily. RNA M5U methyltransferase family. TrmA subfamily.

It carries out the reaction uridine(54) in tRNA + S-adenosyl-L-methionine = 5-methyluridine(54) in tRNA + S-adenosyl-L-homocysteine + H(+). The enzyme catalyses uridine(341) in tmRNA + S-adenosyl-L-methionine = 5-methyluridine(341) in tmRNA + S-adenosyl-L-homocysteine + H(+). In terms of biological role, dual-specificity methyltransferase that catalyzes the formation of 5-methyluridine at position 54 (m5U54) in all tRNAs, and that of position 341 (m5U341) in tmRNA (transfer-mRNA). The polypeptide is tRNA/tmRNA (uracil-C(5))-methyltransferase (Shigella flexneri serotype 5b (strain 8401)).